The chain runs to 156 residues: ATP synthase subunit b (156 aa).

The chain crosses the membrane as a helical span at residues 7-27 (LFAQMIVFFVLWWVVARFVWP).

This sequence belongs to the ATPase B chain family. F-type ATPases have 2 components, F(1) - the catalytic core - and F(0) - the membrane proton channel. F(1) has five subunits: alpha(3), beta(3), gamma(1), delta(1), epsilon(1). F(0) has three main subunits: a(1), b(2) and c(10-14). The alpha and beta chains form an alternating ring which encloses part of the gamma chain. F(1) is attached to F(0) by a central stalk formed by the gamma and epsilon chains, while a peripheral stalk is formed by the delta and b chains.

The protein resides in the cell membrane. Its function is as follows. F(1)F(0) ATP synthase produces ATP from ADP in the presence of a proton or sodium gradient. F-type ATPases consist of two structural domains, F(1) containing the extramembraneous catalytic core and F(0) containing the membrane proton channel, linked together by a central stalk and a peripheral stalk. During catalysis, ATP synthesis in the catalytic domain of F(1) is coupled via a rotary mechanism of the central stalk subunits to proton translocation. Functionally, component of the F(0) channel, it forms part of the peripheral stalk, linking F(1) to F(0). The protein is ATP synthase subunit b of Polynucleobacter asymbioticus (strain DSM 18221 / CIP 109841 / QLW-P1DMWA-1) (Polynucleobacter necessarius subsp. asymbioticus).